A 145-amino-acid polypeptide reads, in one-letter code: Flagellar assembly factor FliW (145 aa).

Belongs to the FliW family. As to quaternary structure, interacts with translational regulator CsrA and flagellin(s).

The protein localises to the cytoplasm. Functionally, acts as an anti-CsrA protein, binds CsrA and prevents it from repressing translation of its target genes, one of which is flagellin. Binds to flagellin and participates in the assembly of the flagellum. This chain is Flagellar assembly factor FliW, found in Clostridium kluyveri (strain NBRC 12016).